A 178-amino-acid chain; its full sequence is PRA1 family protein 2 (178 aa).

Residues 1–41 (MSEVRLPPLRALDDFVLGSARLAAPDPCDPQRWCHRVINNL) are Cytoplasmic-facing. Residues 42–62 (LYYQTNYLLCFGIGLALAGYV) form a helical membrane-spanning segment. Topologically, residues 63 to 64 (RP) are extracellular. The helical transmembrane segment at 65-85 (LHTLLSALVVAVALGMLVWAA) threads the bilayer. Over 86 to 96 (ETRAAVRRCRR) the chain is Cytoplasmic. A helical transmembrane segment spans residues 97–119 (SHPAACLAAVLAVGLLVLWVVGG). Residues 120 to 122 (ACT) lie on the Extracellular side of the membrane. Residues 123-140 (FLLSIAGPVLLILVHASL) traverse the membrane as a helical segment. Residues 141–178 (RLRNLKNKIENKIESIGLKRTPMGLLLEALGQEQEAGS) are Cytoplasmic-facing.

This sequence belongs to the PRA1 family. Interacts with CCR5 and GDE1.

It localises to the endosome membrane. Its function is as follows. May be involved in ER/Golgi transport and vesicular traffic. Plays a proapoptotic role in cerulenin-induced neuroblastoma apoptosis. The polypeptide is PRA1 family protein 2 (PRAF2) (Macaca fascicularis (Crab-eating macaque)).